Consider the following 265-residue polypeptide: Hydroxyethylthiazole kinase (265 aa).

Met50 provides a ligand contact to substrate. ATP-binding residues include Arg125 and Thr171. Residue Gly198 participates in substrate binding.

Belongs to the Thz kinase family. The cofactor is Mg(2+).

It catalyses the reaction 5-(2-hydroxyethyl)-4-methylthiazole + ATP = 4-methyl-5-(2-phosphooxyethyl)-thiazole + ADP + H(+). It functions in the pathway cofactor biosynthesis; thiamine diphosphate biosynthesis; 4-methyl-5-(2-phosphoethyl)-thiazole from 5-(2-hydroxyethyl)-4-methylthiazole: step 1/1. Functionally, catalyzes the phosphorylation of the hydroxyl group of 4-methyl-5-beta-hydroxyethylthiazole (THZ). This Salmonella arizonae (strain ATCC BAA-731 / CDC346-86 / RSK2980) protein is Hydroxyethylthiazole kinase.